The following is a 640-amino-acid chain: Choline O-acetyltransferase (640 aa).

Ser-17 is subject to Phosphoserine. His-334 serves as the catalytic Proton acceptor. Ser-365 is modified (phosphoserine). CoA contacts are provided by residues 412–424, Ser-450, and Gln-551; that span reads GKTF…YSPD. Positions 614–640 are disordered; the sequence is CSSRQPADSKPPAPKEKARGPSQAKQS.

The protein belongs to the carnitine/choline acetyltransferase family. As to quaternary structure, monomer.

The catalysed reaction is choline + acetyl-CoA = acetylcholine + CoA. Catalyzes the reversible synthesis of acetylcholine (ACh) from acetyl CoA and choline at cholinergic synapses. This is Choline O-acetyltransferase (Chat) from Rattus norvegicus (Rat).